The following is a 769-amino-acid chain: Spastin (769 aa).

Residues 1-100 (MVRTKNQSSS…TSGNVPRGGQ (100 aa)) form a disordered region. The Cytoplasmic segment spans residues 1–113 (MVRTKNQSSS…KQNLYVVSFP (113 aa)). The interval 1–201 (MVRTKNQSSS…QTLEMAASRG (201 aa)) is required for localization to punctate cytoplasmic foci. Over residues 8 to 19 (SSSSSASSSTKS) the composition is skewed to low complexity. Positions 24 to 33 (SGGGGGGGGS) are enriched in gly residues. The span at 54–63 (SSKLSSNRQR) shows a compositional bias: polar residues. Positions 64-78 (TTTTITTTTTTPGSS) are enriched in low complexity. Positions 114 to 134 (IIFLFNVLRSLIYQLFCIFRY) form an intramembrane region, helical. Topologically, residues 135-769 (LYGASTKVIY…WSQDYGDITI (635 aa)) are cytoplasmic. Residues 199–769 (SRGGTGAGGY…WSQDYGDITI (571 aa)) form a sufficient for interaction with microtubules and microtubule severing region. In terms of domain architecture, MIT spans 224–299 (HRRAFEYISK…SMARDRLHFL (76 aa)). Positions 314–462 (KEQPKKQLPH…NAASGSGSGA (149 aa)) are disordered. The segment covering 334–344 (TTTSSGSSSSS) has biased composition (low complexity). Composition is skewed to polar residues over residues 395–413 (NKSQ…STSV) and 434–450 (QFSS…RTPI). The segment covering 451–462 (NNNAASGSGSGA) has biased composition (low complexity). Residues 452–466 (NNAASGSGSGASTPL) form a required for interaction with microtubules region. 534–541 (GPPGNGKT) contributes to the ATP binding site.

This sequence belongs to the AAA ATPase family. Spastin subfamily. Homohexamer. The homohexamer is stabilized by ATP-binding. The homohexamer may adopt a ring conformation through which microtubules pass prior to being severed. Interacts with microtubules. Interacts with atl; may be involved in microtubule dynamics.

The protein resides in the membrane. The protein localises to the cytoplasm. It is found in the cytoskeleton. Its subcellular location is the microtubule organizing center. It localises to the centrosome. The protein resides in the chromosome. The protein localises to the lipid droplet. It carries out the reaction n ATP + n H2O + a microtubule = n ADP + n phosphate + (n+1) alpha/beta tubulin heterodimers.. In terms of biological role, ATP-dependent microtubule severing protein. Stimulates microtubule minus-end depolymerization and poleward microtubule flux in the mitotic spindle. Regulates microtubule stability in the neuromuscular junction synapse. Involved in lipid metabolism by regulating the size and distribution of lipid droplets. Involved in axon regeneration by regulating microtubule severing. The sequence is that of Spastin from Drosophila virilis (Fruit fly).